A 122-amino-acid polypeptide reads, in one-letter code: Large ribosomal subunit protein uL18 (122 aa).

Residues 1–27 are disordered; sequence MSNLSRKQQTQKRHRRLRRHLNGTAQR. Residues 9–21 are compositionally biased toward basic residues; that stretch reads QTQKRHRRLRRHL.

The protein belongs to the universal ribosomal protein uL18 family. In terms of assembly, part of the 50S ribosomal subunit; part of the 5S rRNA/L5/L18/L25 subcomplex. Contacts the 5S and 23S rRNAs.

This is one of the proteins that bind and probably mediate the attachment of the 5S RNA into the large ribosomal subunit, where it forms part of the central protuberance. The sequence is that of Large ribosomal subunit protein uL18 from Prochlorococcus marinus (strain MIT 9303).